A 363-amino-acid polypeptide reads, in one-letter code: Protein LEG1 homolog (363 aa).

The N-terminal stretch at 1–19 is a signal peptide; the sequence is MQCVWTLSLLQLVALWANA. 3 N-linked (GlcNAc...) asparagine glycosylation sites follow: Asn79, Asn261, and Asn292.

Belongs to the LEG1 family.

Its subcellular location is the secreted. Functionally, may be involved in early liver development. This Oncorhynchus mykiss (Rainbow trout) protein is Protein LEG1 homolog.